The following is a 101-amino-acid chain: Putative pterin-4-alpha-carbinolamine dehydratase (101 aa).

The protein belongs to the pterin-4-alpha-carbinolamine dehydratase family.

It catalyses the reaction (4aS,6R)-4a-hydroxy-L-erythro-5,6,7,8-tetrahydrobiopterin = (6R)-L-erythro-6,7-dihydrobiopterin + H2O. The protein is Putative pterin-4-alpha-carbinolamine dehydratase (phhB) of Ralstonia nicotianae (strain ATCC BAA-1114 / GMI1000) (Ralstonia solanacearum).